Reading from the N-terminus, the 253-residue chain is Ethylene-responsive transcription factor RAP2-11 (253 aa).

The AP2/ERF DNA-binding region spans 21–78 (KFVGVRQRPSGKWVAEIKDTTQKIRMWLGTFETAEEAARAYDEAACLLRGSNTRTNFA).

This sequence belongs to the AP2/ERF transcription factor family. ERF subfamily.

It is found in the nucleus. In terms of biological role, probably acts as a transcriptional activator. Binds to the GCC-box pathogenesis-related promoter element. May be involved in the regulation of gene expression by stress factors and by components of stress signal transduction pathways. This is Ethylene-responsive transcription factor RAP2-11 (RAP2-11) from Arabidopsis thaliana (Mouse-ear cress).